The sequence spans 270 residues: NAD kinase (270 aa).

The Proton acceptor role is filled by Asp45. Residues 45-46 (DG), 121-122 (NE), Lys147, Asp149, 160-165 (TAYSKS), and Ala184 contribute to the NAD(+) site.

It belongs to the NAD kinase family. Requires a divalent metal cation as cofactor.

Its subcellular location is the cytoplasm. The catalysed reaction is NAD(+) + ATP = ADP + NADP(+) + H(+). Its function is as follows. Involved in the regulation of the intracellular balance of NAD and NADP, and is a key enzyme in the biosynthesis of NADP. Catalyzes specifically the phosphorylation on 2'-hydroxyl of the adenosine moiety of NAD to yield NADP. This Lactobacillus johnsonii (strain CNCM I-12250 / La1 / NCC 533) protein is NAD kinase.